A 337-amino-acid polypeptide reads, in one-letter code: Viral cathepsin (337 aa).

The signal sequence occupies residues 1-16 (MNKLLILFLLLNAALT). A propeptide spans 17-126 (RQDNHASANN…VVDGPAQRQR (110 aa)) (activation peptide). 3 cysteine pairs are disulfide-bonded: cysteine 147–cysteine 188, cysteine 181–cysteine 221, and cysteine 276–cysteine 324. Cysteine 150 is an active-site residue. Active-site residues include histidine 283 and asparagine 303.

The protein belongs to the peptidase C1 family. Post-translationally, synthesized as an inactive proenzyme and activated by proteolytic removal of the inhibitory propeptide.

It catalyses the reaction Endopeptidase of broad specificity, hydrolyzing substrates of both cathepsin L and cathepsin B.. Functionally, cysteine protease that plays an essential role in host liquefaction to facilitate horizontal transmission of the virus. May participate in the degradation of foreign protein expressed by the baculovirus system. This Lepidoptera (butterflies and moths) protein is Viral cathepsin (VCATH).